Reading from the N-terminus, the 315-residue chain is Mycothiol acetyltransferase (315 aa).

N-acetyltransferase domains follow at residues 4 to 141 (LDWR…RPLR) and 152 to 315 (VVIR…GTDN). E36 contributes to the 1D-myo-inositol 2-(L-cysteinylamino)-2-deoxy-alpha-D-glucopyranoside binding site. Acetyl-CoA-binding positions include 80–82 (LVV) and 88–93 (RRGIGT). The 1D-myo-inositol 2-(L-cysteinylamino)-2-deoxy-alpha-D-glucopyranoside site is built by E179, K224, and E234. Acetyl-CoA-binding positions include 238–240 (LGV) and 245–251 (QRRGLGQ). 1D-myo-inositol 2-(L-cysteinylamino)-2-deoxy-alpha-D-glucopyranoside is bound at residue Y282. 287–292 (NVAAVR) lines the acetyl-CoA pocket.

The protein belongs to the acetyltransferase family. MshD subfamily. In terms of assembly, monomer.

The catalysed reaction is 1D-myo-inositol 2-(L-cysteinylamino)-2-deoxy-alpha-D-glucopyranoside + acetyl-CoA = mycothiol + CoA + H(+). Its function is as follows. Catalyzes the transfer of acetyl from acetyl-CoA to desacetylmycothiol (Cys-GlcN-Ins) to form mycothiol. The chain is Mycothiol acetyltransferase from Mycobacterium bovis (strain ATCC BAA-935 / AF2122/97).